A 360-amino-acid polypeptide reads, in one-letter code: Peptide chain release factor 1 (360 aa).

Glutamine 237 is modified (N5-methylglutamine).

The protein belongs to the prokaryotic/mitochondrial release factor family. Methylated by PrmC. Methylation increases the termination efficiency of RF1.

It localises to the cytoplasm. In terms of biological role, peptide chain release factor 1 directs the termination of translation in response to the peptide chain termination codons UAG and UAA. The chain is Peptide chain release factor 1 from Azotobacter vinelandii (strain DJ / ATCC BAA-1303).